The primary structure comprises 336 residues: Protein FPV127 (336 aa).

The disordered stretch occupies residues 1 to 22; it reads MGGGLVLPTRDPPKEQDTSETA.

This sequence belongs to the poxviruses A16/G9/J5 family.

The chain is Protein FPV127 from Vertebrata (FPV).